Consider the following 168-residue polypeptide: uncharacterized protein (168 aa).

This is an uncharacterized protein from Bacillus subtilis (strain 168).